A 254-amino-acid chain; its full sequence is Gamma-glutamyl-gamma-aminobutyrate hydrolase (254 aa).

A Glutamine amidotransferase type-1 domain is found at 16-250 (RNRLKGHATQ…ITAWQHHIAE (235 aa)). Cys114 serves as the catalytic Nucleophile. Residues His222 and Glu224 contribute to the active site.

It belongs to the peptidase C26 family.

It catalyses the reaction 4-(gamma-L-glutamylamino)butanoate + H2O = 4-aminobutanoate + L-glutamate. The protein operates within amine and polyamine degradation; putrescine degradation; 4-aminobutanoate from putrescine: step 4/4. In terms of biological role, involved in the breakdown of putrescine via hydrolysis of the gamma-glutamyl linkage of gamma-glutamyl-gamma-aminobutyrate. This is Gamma-glutamyl-gamma-aminobutyrate hydrolase (puuD) from Shigella flexneri.